The primary structure comprises 678 residues: Exoribonuclease 2 (678 aa).

An RNB domain is found at R193–I521. Residues E568 to T650 enclose the S1 motif domain. A disordered region spans residues E659 to V678.

It belongs to the RNR ribonuclease family. RNase II subfamily.

The protein localises to the cytoplasm. The catalysed reaction is Exonucleolytic cleavage in the 3'- to 5'-direction to yield nucleoside 5'-phosphates.. In terms of biological role, involved in mRNA degradation. Hydrolyzes single-stranded polyribonucleotides processively in the 3' to 5' direction. This Vibrio cholerae serotype O1 (strain ATCC 39315 / El Tor Inaba N16961) protein is Exoribonuclease 2.